The primary structure comprises 100 residues: MIGLSHYLIVSALIFSIGLMGVLRRRNLLMLFFATEVMLNAVNIAFAAISHYYNDLTGQMFAFFIIAIAASEVAVGLGILIVLYKRYGSLDLDDLASMKG.

Helical transmembrane passes span isoleucine 2–valine 22, leucine 29–isoleucine 49, and phenylalanine 63–leucine 83.

The protein belongs to the complex I subunit 4L family. As to quaternary structure, NDH-1 is composed of 14 different subunits. Subunits NuoA, H, J, K, L, M, N constitute the membrane sector of the complex.

Its subcellular location is the cell inner membrane. The catalysed reaction is a quinone + NADH + 5 H(+)(in) = a quinol + NAD(+) + 4 H(+)(out). In terms of biological role, NDH-1 shuttles electrons from NADH, via FMN and iron-sulfur (Fe-S) centers, to quinones in the respiratory chain. The immediate electron acceptor for the enzyme in this species is believed to be ubiquinone. Couples the redox reaction to proton translocation (for every two electrons transferred, four hydrogen ions are translocated across the cytoplasmic membrane), and thus conserves the redox energy in a proton gradient. The polypeptide is NADH-quinone oxidoreductase subunit K (Sulfurovum sp. (strain NBC37-1)).